The sequence spans 253 residues: Proproteinase E (253 aa).

The propeptide at 1–11 (FSQPFSRPSSR) is activation peptide. Residues 12–251 (VVNGEDAVPY…FIDWIDETIA (240 aa)) enclose the Peptidase S1 domain. 5 cysteine pairs are disulfide-bonded: Cys41–Cys57, Cys100–Cys103, Cys140–Cys206, Cys171–Cys187, and Cys196–Cys227.

This sequence belongs to the peptidase S1 family. Monomer. The zymogen is secreted as a ternary complex composed of procarboxypeptidase A, chymotrypsinogen C and proproteinase E. As to expression, pancreas.

Its subcellular location is the secreted. The protein localises to the extracellular space. May protect procarboxypeptidase A against denaturation in the acidic environment of the ruminant duodenum. This chain is Proproteinase E, found in Bos taurus (Bovine).